The primary structure comprises 358 residues: MNFTVGFKPLLGDAHSMDNLEKQLICPICLEMFSKPVVILPCQHNLCRKCANDVFQASNPLWQSRGSTTVSSGGRFRCPSCRHEVVLDRHGVYGLQRNLLVENIIDIYKQESSRPLHSKAEQHLMCEEHEEEKINIYCLSCEVPTCSLCKVFGAHKDCEVAPLPTIYKRQKSELSDGIAMLVAGNDRVQAVITQMEEVCQTIEDNSRRQKQLLNQRFESLCAVLEERKGELLQALAREQEEKLQRVRGLIRQYGDHLEASSKLVESAIQSMEEPQMALYLQQAKELINKVGAMSKVELAGRPEPGYESMEQFTVRVEHVAEMLRTIDFQPGASGEEEEVAPDGEEGSAGPEEERPDGP.

An RING-type zinc finger spans residues 26 to 82 (CPICLEMFSKPVVILPCQHNLCRKCANDVFQASNPLWQSRGSTTVSSGGRFRCPSCR). The B box-type zinc-finger motif lies at 121–163 (EQHLMCEEHEEEKINIYCLSCEVPTCSLCKVFGAHKDCEVAPL). Residues Cys-126, His-129, Cys-149, and His-155 each coordinate Zn(2+). Residues 168–211 (KRQKSELSDGIAMLVAGNDRVQAVITQMEEVCQTIEDNSRRQKQ) form a mediates microtubule-binding and homooligomerization region. The stretch at 220 to 258 (LCAVLEERKGELLQALAREQEEKLQRVRGLIRQYGDHLE) forms a coiled coil. The COS domain maps to 271-329 (MEEPQMALYLQQAKELINKVGAMSKVELAGRPEPGYESMEQFTVRVEHVAEMLRTIDFQ). Residues 326–358 (IDFQPGASGEEEEVAPDGEEGSAGPEEERPDGP) are disordered. Over residues 334-345 (GEEEEVAPDGEE) the composition is skewed to acidic residues.

Homooligomer and heterooligomer. Interacts with tubulin. Interacts with TRIM63 and probably with TRIM55. Specifically expressed in heart and skeletal muscle.

Its subcellular location is the cytoplasm. It is found in the cytoskeleton. It localises to the myofibril. The protein localises to the sarcomere. The protein resides in the z line. May bind and stabilize microtubules during myotubes formation. This chain is Tripartite motif-containing protein 54 (TRIM54), found in Homo sapiens (Human).